The sequence spans 424 residues: Enolase (424 aa).

Gln-162 contacts (2R)-2-phosphoglycerate. Glu-204 (proton donor) is an active-site residue. Mg(2+) is bound by residues Asp-241, Glu-284, and Asp-311. 4 residues coordinate (2R)-2-phosphoglycerate: Lys-336, Arg-365, Ser-366, and Lys-387. Lys-336 (proton acceptor) is an active-site residue.

Belongs to the enolase family. Requires Mg(2+) as cofactor.

The protein resides in the cytoplasm. The protein localises to the secreted. It is found in the cell surface. The enzyme catalyses (2R)-2-phosphoglycerate = phosphoenolpyruvate + H2O. It functions in the pathway carbohydrate degradation; glycolysis; pyruvate from D-glyceraldehyde 3-phosphate: step 4/5. Catalyzes the reversible conversion of 2-phosphoglycerate (2-PG) into phosphoenolpyruvate (PEP). It is essential for the degradation of carbohydrates via glycolysis. This is Enolase from Chelativorans sp. (strain BNC1).